A 543-amino-acid polypeptide reads, in one-letter code: Cyclohexanone 1,2-monooxygenase (543 aa).

6 residues coordinate FAD: F16, D37, W46, D57, Y63, and V110.

The protein belongs to the FAD-binding monooxygenase family. It depends on FAD as a cofactor.

It catalyses the reaction cyclohexanone + NADPH + O2 + H(+) = hexano-6-lactone + NADP(+) + H2O. This chain is Cyclohexanone 1,2-monooxygenase, found in Acinetobacter sp.